The following is a 150-amino-acid chain: Large ribosomal subunit protein bL9 (150 aa).

This sequence belongs to the bacterial ribosomal protein bL9 family.

Binds to the 23S rRNA. This Paraburkholderia xenovorans (strain LB400) protein is Large ribosomal subunit protein bL9.